Reading from the N-terminus, the 63-residue chain is Beta-defensin 6 (63 aa).

Residues Met-1–Ser-22 form the signal peptide. Gln-23 carries the pyrrolidone carboxylic acid modification. Cystine bridges form between Cys-31-Cys-59, Cys-38-Cys-52, and Cys-42-Cys-60.

Belongs to the beta-defensin family. In terms of tissue distribution, predominantly expressed in skeletal muscle, also expressed in esophagus, tongue, and trachea. Also expressed in lung when induced by lipopolysaccharide.

The protein resides in the secreted. Has potent antibacterial activity against E.coli (ATCC 25922). This is Beta-defensin 6 (Defb6) from Mus musculus (Mouse).